Here is a 774-residue protein sequence, read N- to C-terminus: Shugoshin (774 aa).

The stretch at 41–105 (SLRIRGLENE…AELSSLLASL (65 aa)) forms a coiled coil. Disordered stretches follow at residues 106–151 (GEPP…QEGR), 205–661 (SPSP…DAQL), and 676–774 (CASP…SMML). Over residues 109–120 (PSKRRLSEERRY) the composition is skewed to basic and acidic residues. The segment covering 214-224 (AEETETTEQVE) has biased composition (acidic residues). Positions 297-318 (GDNQNEPNKATKLQQGKENGNE) are enriched in polar residues. Positions 382–398 (KGKEKVDLPAPDKKSAV) are enriched in basic and acidic residues. Positions 399-409 (EETQGNSTSAF) are enriched in polar residues. 2 stretches are compositionally biased toward basic and acidic residues: residues 482–495 (NLRD…KELF) and 549–558 (FEKEKEKEPQ). Composition is skewed to polar residues over residues 595–604 (PSVQEQSTLN) and 640–651 (QSMSRSVPTIPT). Low complexity predominate over residues 706–722 (ASSAASTETTATASAKP). Over residues 743 to 754 (LAQEEEDEEDVG) the composition is skewed to acidic residues. Residues 765-774 (RASRRRSMML) show a composition bias toward basic residues.

The protein belongs to the shugoshin family.

It localises to the nucleus. Its subcellular location is the chromosome. It is found in the centromere. Functionally, plays a central role in chromosome cohesion during cell division by preventing premature dissociation of cohesin complex from centromeres after prophase, when most of cohesin complex dissociates from chromosomes arms. This chain is Shugoshin (sgo-1), found in Neurospora crassa (strain ATCC 24698 / 74-OR23-1A / CBS 708.71 / DSM 1257 / FGSC 987).